The primary structure comprises 225 residues: MNLIEFTLLDQTTPNSVISTTSNDLSNWSRLSSLWPLLYGTSCCFIEFASLIGSRFDFDRYGLVPRSSPRQADLILTAGTVTMKMAPSLVRLYEQMAEPKYVIAMGACTITGGMFSTDSYSTVRGVDKLIPVDVYLPGCPPKPEAVIDAITKLRKKISREISEDRVMSQRENRSFTTNHKFDIRRSTHTGNYDQGLFYQSSYTSEISSKRFFKSKNSVSSHELVN.

Cys-43, Cys-44, Cys-108, and Cys-139 together coordinate [4Fe-4S] cluster.

The protein belongs to the complex I 20 kDa subunit family. NDH is composed of at least 16 different subunits, 5 of which are encoded in the nucleus. [4Fe-4S] cluster serves as cofactor.

It localises to the plastid. The protein localises to the chloroplast thylakoid membrane. It carries out the reaction a plastoquinone + NADH + (n+1) H(+)(in) = a plastoquinol + NAD(+) + n H(+)(out). It catalyses the reaction a plastoquinone + NADPH + (n+1) H(+)(in) = a plastoquinol + NADP(+) + n H(+)(out). In terms of biological role, NDH shuttles electrons from NAD(P)H:plastoquinone, via FMN and iron-sulfur (Fe-S) centers, to quinones in the photosynthetic chain and possibly in a chloroplast respiratory chain. The immediate electron acceptor for the enzyme in this species is believed to be plastoquinone. Couples the redox reaction to proton translocation, and thus conserves the redox energy in a proton gradient. This Dioscorea elephantipes (Elephant's foot yam) protein is NAD(P)H-quinone oxidoreductase subunit K, chloroplastic.